The following is a 359-amino-acid chain: Outer membrane protein assembly factor BamC (359 aa).

The first 21 residues, 1-21 (MSTLNKYKTLIIISSLAAVSS), serve as a signal peptide directing secretion. Cys22 carries N-palmitoyl cysteine lipidation. Residue Cys22 is the site of S-diacylglycerol cysteine attachment.

The protein belongs to the BamC family. In terms of assembly, part of the Bam complex.

The protein localises to the cell outer membrane. Functionally, part of the outer membrane protein assembly complex, which is involved in assembly and insertion of beta-barrel proteins into the outer membrane. In Kangiella koreensis (strain DSM 16069 / JCM 12317 / KCTC 12182 / SW-125), this protein is Outer membrane protein assembly factor BamC.